The sequence spans 307 residues: Salivary glue protein Sgs-3 (307 aa).

An N-terminal signal peptide occupies residues 1-23; it reads MKLTIATALASILLIGSANVANC. The interval 56–257 is disordered; sequence APPTQQSTTQ…PTTTKPTTPK (202 aa).

Post-translationally, O-glycosylated by Pgnat9 in salivary glands. In terms of tissue distribution, specifically expressed in the salivary gland.

It is found in the secreted. The chain is Salivary glue protein Sgs-3 from Drosophila melanogaster (Fruit fly).